The chain runs to 319 residues: Methionyl-tRNA formyltransferase (319 aa).

114–117 (SLLP) lines the (6S)-5,6,7,8-tetrahydrofolate pocket.

The protein belongs to the Fmt family.

The enzyme catalyses L-methionyl-tRNA(fMet) + (6R)-10-formyltetrahydrofolate = N-formyl-L-methionyl-tRNA(fMet) + (6S)-5,6,7,8-tetrahydrofolate + H(+). In terms of biological role, attaches a formyl group to the free amino group of methionyl-tRNA(fMet). The formyl group appears to play a dual role in the initiator identity of N-formylmethionyl-tRNA by promoting its recognition by IF2 and preventing the misappropriation of this tRNA by the elongation apparatus. The polypeptide is Methionyl-tRNA formyltransferase (Acinetobacter baylyi (strain ATCC 33305 / BD413 / ADP1)).